Reading from the N-terminus, the 614-residue chain is Membrane protein insertase YidC (614 aa).

Residues 6–26 (IVLLIIFSTSLLFLWDAWIKE) form a helical membrane-spanning segment. Composition is skewed to polar residues over residues 34-48 (PAIT…STQS) and 60-70 (ELTSSQASPDT). A disordered region spans residues 34-87 (PAITQADSSAGSTQSRNDDSLPVPGSELTSSQASPDTNGIPASGGNGDSVTPRL). The next 4 membrane-spanning stretches (helical) occupy residues 380-400 (WGVA…PLSA), 450-470 (FPIL…LAAV), 484-504 (LSSP…MFVQ), and 524-544 (PVAF…YSLV). The disordered stretch occupies residues 562 to 614 (TAPSKDTPEPPVSKQVNSSENPETTANSPADSPKQPQTPANNPRKMYKRTRKK). A compositionally biased stretch (polar residues) spans 575-602 (KQVNSSENPETTANSPADSPKQPQTPAN).

Belongs to the OXA1/ALB3/YidC family. Type 1 subfamily. Interacts with the Sec translocase complex via SecD. Specifically interacts with transmembrane segments of nascent integral membrane proteins during membrane integration.

It is found in the cell inner membrane. In terms of biological role, required for the insertion and/or proper folding and/or complex formation of integral membrane proteins into the membrane. Involved in integration of membrane proteins that insert both dependently and independently of the Sec translocase complex, as well as at least some lipoproteins. Aids folding of multispanning membrane proteins. The protein is Membrane protein insertase YidC of Nitrosomonas europaea (strain ATCC 19718 / CIP 103999 / KCTC 2705 / NBRC 14298).